The following is a 117-amino-acid chain: Ig lambda-1 chain V region (117 aa).

The N-terminal stretch at 1 to 20 (MAWISLILSLLALSSGGAIS) is a signal peptide. Gln-21 carries the pyrrolidone carboxylic acid modification. Residues 21–117 (QAVVTQESAL…YFCALWYSNH (97 aa)) enclose the Ig-like domain.

The sequence is that of Ig lambda-1 chain V region from Mus musculus (Mouse).